The following is a 489-amino-acid chain: Glycogen synthase (489 aa).

R20 contacts ADP-alpha-D-glucose.

This sequence belongs to the glycosyltransferase 1 family. Bacterial/plant glycogen synthase subfamily.

It carries out the reaction [(1-&gt;4)-alpha-D-glucosyl](n) + ADP-alpha-D-glucose = [(1-&gt;4)-alpha-D-glucosyl](n+1) + ADP + H(+). The protein operates within glycan biosynthesis; glycogen biosynthesis. Synthesizes alpha-1,4-glucan chains using ADP-glucose. This is Glycogen synthase from Chlorobium phaeovibrioides (strain DSM 265 / 1930) (Prosthecochloris vibrioformis (strain DSM 265)).